Reading from the N-terminus, the 389-residue chain is Curcumin synthase 1 (389 aa).

The active site involves Cys-164.

This sequence belongs to the thiolase-like superfamily. Chalcone/stilbene synthases family. As to quaternary structure, homodimer. Expressed in both the leaf and rhizome, with higher expression in the rhizome.

It catalyses the reaction (E)-feruloylacetyl-CoA + (E)-feruloyl-CoA + H2O = curcumin + CO2 + 2 CoA. It functions in the pathway secondary metabolite biosynthesis; flavonoid biosynthesis. Its function is as follows. Catalyzes the synthesis of curcumin by condensing feruloyl-CoA with a diketide-CoA in the curcuminoid biosynthesis. The sequence is that of Curcumin synthase 1 (CURS1) from Curcuma longa (Turmeric).